We begin with the raw amino-acid sequence, 176 residues long: ATP-dependent protease subunit HslV (176 aa).

Thr2 is an active-site residue. Residues Gly158, Cys161, and Thr164 each coordinate Na(+).

It belongs to the peptidase T1B family. HslV subfamily. A double ring-shaped homohexamer of HslV is capped on each side by a ring-shaped HslU homohexamer. The assembly of the HslU/HslV complex is dependent on binding of ATP.

It is found in the cytoplasm. The enzyme catalyses ATP-dependent cleavage of peptide bonds with broad specificity.. Allosterically activated by HslU binding. In terms of biological role, protease subunit of a proteasome-like degradation complex believed to be a general protein degrading machinery. This chain is ATP-dependent protease subunit HslV, found in Pasteurella multocida (strain Pm70).